A 186-amino-acid chain; its full sequence is Peptidyl-tRNA hydrolase (186 aa).

Tyrosine 14 serves as a coordination point for tRNA. The active-site Proton acceptor is histidine 19. Tyrosine 64, asparagine 66, and asparagine 112 together coordinate tRNA.

It belongs to the PTH family. Monomer.

It is found in the cytoplasm. It catalyses the reaction an N-acyl-L-alpha-aminoacyl-tRNA + H2O = an N-acyl-L-amino acid + a tRNA + H(+). Functionally, hydrolyzes ribosome-free peptidyl-tRNAs (with 1 or more amino acids incorporated), which drop off the ribosome during protein synthesis, or as a result of ribosome stalling. Catalyzes the release of premature peptidyl moieties from peptidyl-tRNA molecules trapped in stalled 50S ribosomal subunits, and thus maintains levels of free tRNAs and 50S ribosomes. The protein is Peptidyl-tRNA hydrolase of Geobacillus kaustophilus (strain HTA426).